Here is a 526-residue protein sequence, read N- to C-terminus: Maturase K (526 aa).

The protein belongs to the intron maturase 2 family. MatK subfamily.

It is found in the plastid. It localises to the chloroplast. Its function is as follows. Usually encoded in the trnK tRNA gene intron. Probably assists in splicing its own and other chloroplast group II introns. The protein is Maturase K of Iris pseudacorus (Yellow flag).